The following is a 109-amino-acid chain: Cytochrome bo(3) ubiquinol oxidase subunit 4 (109 aa).

The Cytoplasmic segment spans residues 1–17 (MSHSTDHSGASHGSVKT). A helical membrane pass occupies residues 18–36 (YMTGFILSIILTVIPFWMV). Residues 37-45 (MTGAASPAV) are Periplasmic-facing. A helical transmembrane segment spans residues 46 to 64 (ILGTILAMAVVQVLVHLVC). The Cytoplasmic portion of the chain corresponds to 65-80 (FLHMNTKSDEGWNMTA). A helical transmembrane segment spans residues 81–99 (FVFTVLIIAILVVGSIWIM). Residues 100 to 109 (WNLNYNMMMH) lie on the Periplasmic side of the membrane.

This sequence belongs to the cytochrome c oxidase bacterial subunit 4 family. As to quaternary structure, heterooctamer of two A chains, two B chains, two C chains and two D chains.

The protein resides in the cell inner membrane. Functionally, cytochrome bo(3) ubiquinol terminal oxidase is the component of the aerobic respiratory chain of E.coli that predominates when cells are grown at high aeration. Has proton pump activity across the membrane in addition to electron transfer, pumping 2 protons/electron. The sequence is that of Cytochrome bo(3) ubiquinol oxidase subunit 4 (cyoD) from Escherichia coli O157:H7.